Consider the following 365-residue polypeptide: Red-sensitive opsin (365 aa).

The Extracellular segment spans residues M1 to V51. The N-linked (GlcNAc...) asparagine glycan is linked to N33. A helical membrane pass occupies residues Y52 to A76. Over T77–N88 the chain is Cytoplasmic. The helical transmembrane segment at W89 to Q113 threads the bilayer. Residues I114–E128 lie on the Extracellular side of the membrane. The cysteines at positions 125 and 202 are disulfide-linked. The helical transmembrane segment at G129–W148 threads the bilayer. Topologically, residues E149–L167 are cytoplasmic. The chain crosses the membrane as a helical span at residues A168 to S191. Topologically, residues R192–S217 are extracellular. Residues Y218–I245 traverse the membrane as a helical segment. Over R246 to R267 the chain is Cytoplasmic. The helical transmembrane segment at M268 to A291 threads the bilayer. Residues F292–H299 lie on the Extracellular side of the membrane. A helical membrane pass occupies residues P300–M324. Position 311 is an N6-(retinylidene)lysine (K311). Residues N325 to A365 are Cytoplasmic-facing. The interval D342 to A365 is disordered. The span at E345–A365 shows a compositional bias: low complexity.

The protein belongs to the G-protein coupled receptor 1 family. Opsin subfamily. Phosphorylated on some or all of the serine and threonine residues present in the C-terminal region.

The protein localises to the membrane. Functionally, visual pigments are the light-absorbing molecules that mediate vision. They consist of an apoprotein, opsin, covalently linked to cis-retinal. The polypeptide is Red-sensitive opsin (opn1lw1) (Xenopus laevis (African clawed frog)).